A 128-amino-acid chain; its full sequence is Large ribosomal subunit protein eL22 (128 aa).

This sequence belongs to the eukaryotic ribosomal protein eL22 family. In terms of assembly, component of the large ribosomal subunit.

It localises to the cytoplasm. Component of the large ribosomal subunit. The ribosome is a large ribonucleoprotein complex responsible for the synthesis of proteins in the cell. The sequence is that of Large ribosomal subunit protein eL22 (rpl22) from Ictalurus punctatus (Channel catfish).